Reading from the N-terminus, the 394-residue chain is L-lactate 2-monooxygenase (394 aa).

The 376-residue stretch at 19–394 folds into the FMN hydroxy acid dehydrogenase domain; the sequence is VAPTLPMSYA…LTIDALRPTR (376 aa). Tyrosine 45 is a binding site for a 2-oxocarboxylate. Residues 98–100, serine 129, and glutamine 151 contribute to the FMN site; that span reads PIG. Tyrosine 153 contributes to the a 2-oxocarboxylate binding site. Threonine 179 serves as a coordination point for FMN. Arginine 188 provides a ligand contact to a 2-oxocarboxylate. FMN is bound at residue lysine 267. Histidine 291 serves as the catalytic Proton acceptor. Arginine 294 is a binding site for a 2-oxocarboxylate. FMN-binding positions include 321 to 325 and arginine 345; that span reads DSGIR.

It belongs to the FMN-dependent alpha-hydroxy acid dehydrogenase family. In terms of assembly, homotetramer. The cofactor is FMN.

It carries out the reaction (S)-lactate + O2 = acetate + CO2 + H2O. Its function is as follows. Catalyzes the oxidative decarboxylation of (S)-lactate (L-lactate) to acetate and carbon dioxide. Its physiological role remains unknown. The chain is L-lactate 2-monooxygenase from Mycolicibacterium smegmatis (Mycobacterium smegmatis).